The sequence spans 369 residues: MRFSFFSGIRDLFRHLIISATSGALSDRLGWLWAVIARVFSGSVWLRHKIAKSPHQVQATVVSVGNIVVGGTGKTPLVLWLAQALHERGLSCAVLSRGYKGKYSKKKAFTIVNPALHTASCVGDEPLLLAKYLPSGTVRIQKDRKTLAEKSAGDFDVLLLDDGFQYNRLHKDVEIVLVNGSDPFGGGSFFPKGRLRDFPERLAKADYVMINGRCSPSDQRELDRLHPEEKIVIEPQISEIVWLNQSVNMPRDHWEGLGVGVFCGLGFPKGFLAMLRDAGIHVLGTYLLPDHVGITKQELELFCKKIILRQGVGILCTEKDSVKIGALAEEISFPVGEVRMRFSCVCNERRMVAMLDAIEAIQKNKRVTT.

68–75 (VVGGTGKT) is an ATP binding site.

It belongs to the LpxK family.

It carries out the reaction a lipid A disaccharide + ATP = a lipid IVA + ADP + H(+). It participates in glycolipid biosynthesis; lipid IV(A) biosynthesis; lipid IV(A) from (3R)-3-hydroxytetradecanoyl-[acyl-carrier-protein] and UDP-N-acetyl-alpha-D-glucosamine: step 6/6. Functionally, transfers the gamma-phosphate of ATP to the 4'-position of a tetraacyldisaccharide 1-phosphate intermediate (termed DS-1-P) to form tetraacyldisaccharide 1,4'-bis-phosphate (lipid IVA). The sequence is that of Tetraacyldisaccharide 4'-kinase from Chlamydia trachomatis serovar D (strain ATCC VR-885 / DSM 19411 / UW-3/Cx).